The primary structure comprises 582 residues: ATP-dependent lipid A-core flippase (582 aa).

5 helical membrane-spanning segments follow: residues 16–36, 63–83, 153–173, 253–273, and 275–295; these read LWPM…ALII, VLLW…ASGF, IIGL…ILIV, PIIQ…ASFP, and VMET…IALM. Residues 28–310 form the ABC transmembrane type-1 domain; the sequence is AVAAIALIIN…LTNVNAQFQR (283 aa). The 237-residue stretch at 342–578 folds into the ABC transporter domain; the sequence is LEFRQVNFAY…NGAYAQLHRM (237 aa). ATP is bound at residue 376 to 383; it reads GRSGSGKS.

This sequence belongs to the ABC transporter superfamily. Lipid exporter (TC 3.A.1.106) family. As to quaternary structure, homodimer.

The protein localises to the cell inner membrane. The enzyme catalyses ATP + H2O + lipid A-core oligosaccharideSide 1 = ADP + phosphate + lipid A-core oligosaccharideSide 2.. In terms of biological role, involved in lipopolysaccharide (LPS) biosynthesis. Translocates lipid A-core from the inner to the outer leaflet of the inner membrane. Transmembrane domains (TMD) form a pore in the inner membrane and the ATP-binding domain (NBD) is responsible for energy generation. The protein is ATP-dependent lipid A-core flippase of Pectobacterium atrosepticum (strain SCRI 1043 / ATCC BAA-672) (Erwinia carotovora subsp. atroseptica).